Reading from the N-terminus, the 217-residue chain is Cytidylate kinase (217 aa).

9–17 (GPSSSGKSS) is an ATP binding site.

Belongs to the cytidylate kinase family. Type 1 subfamily.

It is found in the cytoplasm. The catalysed reaction is CMP + ATP = CDP + ADP. It carries out the reaction dCMP + ATP = dCDP + ADP. This Mycoplasma genitalium (strain ATCC 33530 / DSM 19775 / NCTC 10195 / G37) (Mycoplasmoides genitalium) protein is Cytidylate kinase.